We begin with the raw amino-acid sequence, 78 residues long: Delta-conotoxin-like TxMKLT1-0111 (78 aa).

The N-terminal stretch at 1-22 (MKLTCMMIVAVLFLTAWTFATA) is a signal peptide. Residues 23 to 49 (DDSGNGLENLFSNAHHQMKNPEASKLN) constitute a propeptide that is removed on maturation. Cystine bridges form between Cys-53–Cys-68, Cys-60–Cys-72, and Cys-67–Cys-77.

The protein belongs to the conotoxin O1 superfamily. Expressed by the venom duct.

It localises to the secreted. Functionally, delta-conotoxins bind to site 6 of voltage-gated sodium channels (Nav) and inhibit the inactivation process. The sequence is that of Delta-conotoxin-like TxMKLT1-0111 from Conus textile (Cloth-of-gold cone).